Reading from the N-terminus, the 105-residue chain is MGALAELAGDEKNGEGSRTFVFTNEGHTLGNALKTIIARYPEVDFCGYTIPHPTEQKLHFRIQSRRDRAIDILKRGLEDLEGLCDHTIVTFEKEMAEFNAMKVEN.

This sequence belongs to the archaeal Rpo11/eukaryotic RPB11/RPC19 RNA polymerase subunit family. In terms of assembly, component of the RNA polymerase I (Pol I) and RNA polymerase III (Pol III) complexes consisting of at least 13 and 17 subunits, respectively.

Its subcellular location is the nucleus. Its function is as follows. DNA-dependent RNA polymerase catalyzes the transcription of DNA into RNA using the four ribonucleoside triphosphates as substrates. Common core component of RNA polymerases I and III which synthesize ribosomal RNA precursors and small RNAs, such as 5S rRNA and tRNAs, respectively. This chain is DNA-directed RNA polymerases I and III subunit RPAC2, found in Drosophila melanogaster (Fruit fly).